Here is a 676-residue protein sequence, read N- to C-terminus: DNA-directed RNA polymerase subunit beta' (676 aa).

Residues Cys69, Cys71, Cys87, and Cys90 each contribute to the Zn(2+) site. Residues Asp485, Asp487, and Asp489 each coordinate Mg(2+).

This sequence belongs to the RNA polymerase beta' chain family. RpoC1 subfamily. In terms of assembly, in plastids the minimal PEP RNA polymerase catalytic core is composed of four subunits: alpha, beta, beta', and beta''. When a (nuclear-encoded) sigma factor is associated with the core the holoenzyme is formed, which can initiate transcription. It depends on Mg(2+) as a cofactor. Zn(2+) is required as a cofactor.

The protein localises to the plastid. It localises to the chloroplast. The catalysed reaction is RNA(n) + a ribonucleoside 5'-triphosphate = RNA(n+1) + diphosphate. In terms of biological role, DNA-dependent RNA polymerase catalyzes the transcription of DNA into RNA using the four ribonucleoside triphosphates as substrates. This is DNA-directed RNA polymerase subunit beta' from Fagopyrum esculentum subsp. ancestrale (Wild buckwheat).